Here is a 331-residue protein sequence, read N- to C-terminus: Major ferric iron-binding protein (331 aa).

The first 22 residues, 1–22 (MKTSIRYALLAAALTAATPALA), serve as a signal peptide directing secretion. His-31, Glu-79, Tyr-217, and Tyr-218 together coordinate Fe cation.

Belongs to the bacterial solute-binding protein 1 family.

It is found in the periplasm. This protein may be a central component in the iron-acquisition system. This chain is Major ferric iron-binding protein (fbpA), found in Neisseria meningitidis serogroup A / serotype 4A (strain DSM 15465 / Z2491).